The chain runs to 250 residues: Ubiquinone/menaquinone biosynthesis C-methyltransferase UbiE (250 aa).

S-adenosyl-L-methionine-binding positions include threonine 74, aspartate 94, 122–123, and serine 139; that span reads DA.

It belongs to the class I-like SAM-binding methyltransferase superfamily. MenG/UbiE family.

It carries out the reaction a 2-demethylmenaquinol + S-adenosyl-L-methionine = a menaquinol + S-adenosyl-L-homocysteine + H(+). The catalysed reaction is a 2-methoxy-6-(all-trans-polyprenyl)benzene-1,4-diol + S-adenosyl-L-methionine = a 5-methoxy-2-methyl-3-(all-trans-polyprenyl)benzene-1,4-diol + S-adenosyl-L-homocysteine + H(+). The protein operates within quinol/quinone metabolism; menaquinone biosynthesis; menaquinol from 1,4-dihydroxy-2-naphthoate: step 2/2. Its pathway is cofactor biosynthesis; ubiquinone biosynthesis. In terms of biological role, methyltransferase required for the conversion of demethylmenaquinol (DMKH2) to menaquinol (MKH2) and the conversion of 2-polyprenyl-6-methoxy-1,4-benzoquinol (DDMQH2) to 2-polyprenyl-3-methyl-6-methoxy-1,4-benzoquinol (DMQH2). This chain is Ubiquinone/menaquinone biosynthesis C-methyltransferase UbiE, found in Dinoroseobacter shibae (strain DSM 16493 / NCIMB 14021 / DFL 12).